A 197-amino-acid chain; its full sequence is Phosphoheptose isomerase (197 aa).

An SIS domain is found at 34–196; sequence MVHCLLGGNK…DRTLFPQDEQ (163 aa). 49–51 contributes to the substrate binding site; sequence NGG. 2 residues coordinate Zn(2+): histidine 58 and glutamate 62. Residues glutamate 62, 91-92, 117-119, serine 122, and glutamine 172 contribute to the substrate site; these read ND and STS. Glutamine 172 and histidine 180 together coordinate Zn(2+).

This sequence belongs to the SIS family. GmhA subfamily. As to quaternary structure, homotetramer. It depends on Zn(2+) as a cofactor.

It localises to the cytoplasm. The catalysed reaction is 2 D-sedoheptulose 7-phosphate = D-glycero-alpha-D-manno-heptose 7-phosphate + D-glycero-beta-D-manno-heptose 7-phosphate. It functions in the pathway carbohydrate biosynthesis; D-glycero-D-manno-heptose 7-phosphate biosynthesis; D-glycero-alpha-D-manno-heptose 7-phosphate and D-glycero-beta-D-manno-heptose 7-phosphate from sedoheptulose 7-phosphate: step 1/1. Functionally, catalyzes the isomerization of sedoheptulose 7-phosphate in D-glycero-D-manno-heptose 7-phosphate. In Shewanella sp. (strain W3-18-1), this protein is Phosphoheptose isomerase.